Here is a 328-residue protein sequence, read N- to C-terminus: GMP reductase (328 aa).

The active-site Thioimidate intermediate is cysteine 176. 205-228 contributes to the NADP(+) binding site; sequence IIADGGIRTHGDVAKSIRFGATMV.

Belongs to the IMPDH/GMPR family. GuaC type 2 subfamily.

The catalysed reaction is IMP + NH4(+) + NADP(+) = GMP + NADPH + 2 H(+). In terms of biological role, catalyzes the irreversible NADPH-dependent deamination of GMP to IMP. It functions in the conversion of nucleobase, nucleoside and nucleotide derivatives of G to A nucleotides, and in maintaining the intracellular balance of A and G nucleotides. This Bacillus thuringiensis (strain Al Hakam) protein is GMP reductase.